We begin with the raw amino-acid sequence, 539 residues long: Chaperonin GroEL 2 (539 aa).

ATP-binding positions include 29–32 (TIGP), 86–90 (DGTTT), glycine 414, 479–481 (DAL), and aspartate 495.

It belongs to the chaperonin (HSP60) family. In terms of assembly, forms a cylinder of 14 subunits composed of two heptameric rings stacked back-to-back. Interacts with the co-chaperonin GroES.

The protein localises to the cytoplasm. It catalyses the reaction ATP + H2O + a folded polypeptide = ADP + phosphate + an unfolded polypeptide.. Together with its co-chaperonin GroES, plays an essential role in assisting protein folding. The GroEL-GroES system forms a nano-cage that allows encapsulation of the non-native substrate proteins and provides a physical environment optimized to promote and accelerate protein folding. The chain is Chaperonin GroEL 2 from Synechococcus sp. (strain JA-2-3B'a(2-13)) (Cyanobacteria bacterium Yellowstone B-Prime).